We begin with the raw amino-acid sequence, 421 residues long: Ankyrin repeat and SOCS box protein 6 (421 aa).

ANK repeat units follow at residues 67 to 97 (EGVS…NLNF), 102 to 131 (TYYT…DVNR), 136 to 166 (HESS…DVNA), 170 to 205 (HGKT…DVKA), 226 to 255 (GGDK…DPSE), and 260 to 289 (ESLT…AYNC). Residues 360-415 (ALHFSLRQLESYPPPLKHLCRVAIRLYLQPWPVDVKVKALPLPDRLKWYLLSEHSG) form the SOCS box domain.

Belongs to the ankyrin SOCS box (ASB) family. Binds APS. Identified in a complex with ELOB and ELOC. Interacts with CUL5 and RNF7. Interacts with SQSTM1. Ubiquitinated by RNF41; leading to proteasomal degradation.

The protein resides in the cytoplasm. The protein operates within protein modification; protein ubiquitination. In terms of biological role, probable substrate-recognition component of a SCF-like ECS (Elongin-Cullin-SOCS-box protein) E3 ubiquitin-protein ligase complex which mediates the ubiquitination and subsequent proteasomal degradation of target proteins. May play a role in the regulation of cell proliferation and autophagy by promoting the ubiquitination and degradation of SQSTM1. In Homo sapiens (Human), this protein is Ankyrin repeat and SOCS box protein 6 (ASB6).